The following is a 496-amino-acid chain: Acetyl-coenzyme A carboxylase carboxyl transferase subunit beta, chloroplastic (496 aa).

The CoA carboxyltransferase N-terminal domain maps to 229–496 (LWVQCENCYG…FFPLNKNFIK (268 aa)). Zn(2+)-binding residues include Cys-233, Cys-236, Cys-252, and Cys-255. Residues 233 to 255 (CENCYGLNYKKFFRLKLHICEQC) form a C4-type zinc finger.

The protein belongs to the AccD/PCCB family. As to quaternary structure, acetyl-CoA carboxylase is a heterohexamer composed of biotin carboxyl carrier protein, biotin carboxylase and 2 subunits each of ACCase subunit alpha and ACCase plastid-coded subunit beta (accD). Zn(2+) is required as a cofactor.

It localises to the plastid. The protein resides in the chloroplast stroma. It carries out the reaction N(6)-carboxybiotinyl-L-lysyl-[protein] + acetyl-CoA = N(6)-biotinyl-L-lysyl-[protein] + malonyl-CoA. The protein operates within lipid metabolism; malonyl-CoA biosynthesis; malonyl-CoA from acetyl-CoA: step 1/1. Its function is as follows. Component of the acetyl coenzyme A carboxylase (ACC) complex. Biotin carboxylase (BC) catalyzes the carboxylation of biotin on its carrier protein (BCCP) and then the CO(2) group is transferred by the transcarboxylase to acetyl-CoA to form malonyl-CoA. The protein is Acetyl-coenzyme A carboxylase carboxyl transferase subunit beta, chloroplastic of Ranunculus macranthus (Large buttercup).